The chain runs to 117 residues: Bomanin Bicipital 1 (117 aa).

A signal peptide spans 1–20; sequence MKCLILSFAIFVVLASQATA. 2 cysteine pairs are disulfide-bonded: Cys-29-Cys-32 and Cys-107-Cys-110.

Belongs to the bomanin family. In terms of tissue distribution, hemolymph (at protein level).

The protein resides in the secreted. Secreted immune-induced peptide induced by Toll signaling. Has a role in resistance to bacterial and fungal infections. This is Bomanin Bicipital 1 from Drosophila melanogaster (Fruit fly).